The primary structure comprises 334 residues: Ornithine carbamoyltransferase (334 aa).

Residues 57-60, Gln84, Arg108, and 135-138 contribute to the carbamoyl phosphate site; these read STRT and HPTQ. L-ornithine-binding positions include Asn169, Asp233, and 237–238; that span reads SM. Residues 275–276 and Arg320 contribute to the carbamoyl phosphate site; that span reads CL.

This sequence belongs to the aspartate/ornithine carbamoyltransferase superfamily. OTCase family.

The protein localises to the cytoplasm. It catalyses the reaction carbamoyl phosphate + L-ornithine = L-citrulline + phosphate + H(+). Its pathway is amino-acid biosynthesis; L-arginine biosynthesis; L-arginine from L-ornithine and carbamoyl phosphate: step 1/3. Reversibly catalyzes the transfer of the carbamoyl group from carbamoyl phosphate (CP) to the N(epsilon) atom of ornithine (ORN) to produce L-citrulline. This is Ornithine carbamoyltransferase from Aeromonas hydrophila subsp. hydrophila (strain ATCC 7966 / DSM 30187 / BCRC 13018 / CCUG 14551 / JCM 1027 / KCTC 2358 / NCIMB 9240 / NCTC 8049).